Consider the following 307-residue polypeptide: Glycine--tRNA ligase alpha subunit (307 aa).

This sequence belongs to the class-II aminoacyl-tRNA synthetase family. Tetramer of two alpha and two beta subunits.

The protein localises to the cytoplasm. It catalyses the reaction tRNA(Gly) + glycine + ATP = glycyl-tRNA(Gly) + AMP + diphosphate. The chain is Glycine--tRNA ligase alpha subunit from Aeromonas salmonicida (strain A449).